The following is a 179-amino-acid chain: Large ribosomal subunit protein uL5 (179 aa).

This sequence belongs to the universal ribosomal protein uL5 family. Part of the 50S ribosomal subunit; part of the 5S rRNA/L5/L18/L25 subcomplex. Contacts the 5S rRNA and the P site tRNA. Forms a bridge to the 30S subunit in the 70S ribosome.

In terms of biological role, this is one of the proteins that bind and probably mediate the attachment of the 5S RNA into the large ribosomal subunit, where it forms part of the central protuberance. In the 70S ribosome it contacts protein S13 of the 30S subunit (bridge B1b), connecting the 2 subunits; this bridge is implicated in subunit movement. Contacts the P site tRNA; the 5S rRNA and some of its associated proteins might help stabilize positioning of ribosome-bound tRNAs. In Carboxydothermus hydrogenoformans (strain ATCC BAA-161 / DSM 6008 / Z-2901), this protein is Large ribosomal subunit protein uL5.